Reading from the N-terminus, the 406-residue chain is Serine/threonine transporter SstT (406 aa).

9 helical membrane-spanning segments follow: residues 21–41 (LIIGIMLALWIPDIAAPVAIL), 45–65 (FVGALKAVAPVLVLILVMGAI), 79–99 (ILILYLLGTFLAGVTAVIASF), 138–158 (ALMNANYIGILSWAILLGLAL), 179–199 (VVKWVINLAPLGILGLVFDSI), 213–233 (LLLLLVGCMVFVALIINPLIV), 285–305 (ISIPLGATINMAGAAVTIAVL), 313–333 (LGITVDIPTAIILSVLSAIAA), and 360–380 (IAMQVVGVGFIIGVVQDSCET).

The protein belongs to the dicarboxylate/amino acid:cation symporter (DAACS) (TC 2.A.23) family.

Its subcellular location is the cell membrane. The enzyme catalyses L-serine(in) + Na(+)(in) = L-serine(out) + Na(+)(out). The catalysed reaction is L-threonine(in) + Na(+)(in) = L-threonine(out) + Na(+)(out). In terms of biological role, involved in the import of serine and threonine into the cell, with the concomitant import of sodium (symport system). The polypeptide is Serine/threonine transporter SstT (Desulfitobacterium hafniense (strain Y51)).